The following is a 265-amino-acid chain: Orotidine 5'-phosphate decarboxylase (265 aa).

Residues Asp-38, 60 to 62 (KTH), 92 to 101 (DRKFADIGKT), Tyr-218, and Arg-236 each bind substrate. Lys-94 (proton donor) is an active-site residue.

This sequence belongs to the OMP decarboxylase family.

The enzyme catalyses orotidine 5'-phosphate + H(+) = UMP + CO2. It participates in pyrimidine metabolism; UMP biosynthesis via de novo pathway; UMP from orotate: step 2/2. The chain is Orotidine 5'-phosphate decarboxylase (URA3) from Cyberlindnera fabianii (Yeast).